The following is a 332-amino-acid chain: Thiamine-binding periplasmic protein (332 aa).

The N-terminal stretch at 1–20 (MKLLKLTLISTALFSTAALA) is a signal peptide. Residues Trp202 and 220-223 (YSTS) each bind thiamine.

This sequence belongs to the bacterial solute-binding protein 1 family. The complex is composed of two ATP-binding proteins (ThiQ), two transmembrane proteins (ThiP) and a solute-binding protein (ThiB).

The protein resides in the periplasm. Functionally, part of the ABC transporter complex ThiBPQ involved in thiamine import. This Haemophilus influenzae (strain ATCC 51907 / DSM 11121 / KW20 / Rd) protein is Thiamine-binding periplasmic protein (thiB).